Consider the following 651-residue polypeptide: MNLTFYIFFLSLLPSFSSSKPMNCSDTTRLCSSFLAFKPNQNQSFSVIQSMFDVLPQDITADISGGYFFIKKNCSCLTTTHQYTTNTTFTIRQNVGYVYNVTVSAYSGLAFPPNTTRAARAGAVVSVQLLCGCSSGLWNYLMSYVAMAGDSVQSLSSRFGVSMDRIEDVNGILNLDNITAGDLLYIPLDSVPGEPYETSKINPPAPSPAPASSLANGNISDDQVNHTAKSGSHVPYIWIVGGLGVVLALLVLCILVCICLRSSSCSSSEEDGNGHNFQILRKSGFFCGSGRYNCCRSGDFRQTNGETQVVAIPKALGDGMFEIEKPMVFTYEEIRAATDEFSDSNLLGHGNYGSVYFGLLREQEVAVKRMTATKTKEFAAEMKVLCKVHHSNLVELIGYAATVDELFVVYEYVRKGMLKSHLHDPQSKGNTPLSWIMRNQIALDAARGLEYIHEHTKTHYVHRDIKTSNILLDEAFRAKISDFGLAKLVEKTGEGEISVTKVVGTYGYLAPEYLSDGLATSKSDIYAFGVVLFEIISGREAVIRTEAIGTKNPERRPLASIMLAVLKNSPDSMNMSSLKEFVDPNMMDLYPHDCLFKIATLAKQCVDDDPILRPNMKQVVISLSQILLSSIEWEATLAGNSQVFSGLVQGR.

Residues 1 to 19 (MNLTFYIFFLSLLPSFSSS) form the signal peptide. Residues asparagine 2, asparagine 23, asparagine 42, asparagine 73, asparagine 86, asparagine 100, asparagine 114, and asparagine 177 are each glycosylated (N-linked (GlcNAc...) asparagine). Residues 20-236 (KPMNCSDTTR…TAKSGSHVPY (217 aa)) lie on the Extracellular side of the membrane. Disulfide bonds link cysteine 24–cysteine 76, cysteine 31–cysteine 133, and cysteine 74–cysteine 131. The 45-residue stretch at 142 to 186 (MSYVAMAGDSVQSLSSRFGVSMDRIEDVNGILNLDNITAGDLLYI) folds into the LysM domain. A disordered region spans residues 196-216 (YETSKINPPAPSPAPASSLAN). Asparagine 218 and asparagine 225 each carry an N-linked (GlcNAc...) asparagine glycan. Residues 237–257 (IWIVGGLGVVLALLVLCILVC) form a helical membrane-spanning segment. At 258 to 651 (ICLRSSSCSS…QVFSGLVQGR (394 aa)) the chain is on the cytoplasmic side. At threonine 330 the chain carries Phosphothreonine. Residues 341–628 (FSDSNLLGHG…VVISLSQILL (288 aa)) enclose the Protein kinase domain. ATP-binding positions include 347 to 355 (LGHGNYGSV) and lysine 368. Tyrosine 410 carries the phosphotyrosine modification. The Proton acceptor role is filled by aspartate 464. Serine 468 carries the post-translational modification Phosphoserine. A phosphothreonine mark is found at threonine 500 and threonine 505. At tyrosine 513 the chain carries Phosphotyrosine.

This sequence belongs to the protein kinase superfamily. Ser/Thr protein kinase family.

It is found in the cell membrane. Its function is as follows. Putative Lysin motif (LysM) receptor kinase that may recognize microbe-derived N-acetylglucosamine (NAG)-containing ligands. This is LysM domain receptor-like kinase 3 (LYK3) from Arabidopsis thaliana (Mouse-ear cress).